We begin with the raw amino-acid sequence, 146 residues long: Ataxin-7-like protein 1 (146 aa).

Disordered regions lie at residues Met1–Thr27 and Lys125–Val146. Residues Asn127–Arg138 are compositionally biased toward polar residues.

In Mus musculus (Mouse), this protein is Ataxin-7-like protein 1 (Atxn7l1).